Consider the following 190-residue polypeptide: dCTP deaminase, dUMP-forming (190 aa).

Residues 101-106 (KSSLGR), aspartate 119, 127-129 (TLE), glutamine 148, tyrosine 162, and glutamine 174 each bind dCTP. Glutamate 129 functions as the Proton donor/acceptor in the catalytic mechanism. Residues 161–190 (PYGSSGVGSKYQGQRGPTPSRSYQNFIRST) form a disordered region. A compositionally biased stretch (polar residues) spans 171–190 (YQGQRGPTPSRSYQNFIRST).

Belongs to the dCTP deaminase family. Homotrimer.

It catalyses the reaction dCTP + 2 H2O = dUMP + NH4(+) + diphosphate. The protein operates within pyrimidine metabolism; dUMP biosynthesis; dUMP from dCTP: step 1/1. Its function is as follows. Bifunctional enzyme that catalyzes both the deamination of dCTP to dUTP and the hydrolysis of dUTP to dUMP without releasing the toxic dUTP intermediate. The chain is dCTP deaminase, dUMP-forming from Mycobacterium ulcerans (strain Agy99).